Consider the following 169-residue polypeptide: MNKPICSTGLRWLWLAVVVVILDISSKQWVMAHFALYESVPLIPFFNLTYAQNFGAAFSFLADKSGWQRWFFAGIAIGISVVLMVMMYRSTAKQRLINCAYALIIGGALGNLYDRLVHGAVNDFLDFYINNWHFPTFNLADVAICIGAALVIFEGFLSPVEKNAVNNDE.

Transmembrane regions (helical) follow at residues 4 to 24, 29 to 49, 70 to 90, and 101 to 121; these read PICS…ILDI, WVMA…FNLT, WFFA…MYRS, and YALI…HGAV. Residues Asp123 and Asp141 contribute to the active site. A helical membrane pass occupies residues 137-157; the sequence is FNLADVAICIGAALVIFEGFL.

This sequence belongs to the peptidase A8 family.

It localises to the cell inner membrane. The catalysed reaction is Release of signal peptides from bacterial membrane prolipoproteins. Hydrolyzes -Xaa-Yaa-Zaa-|-(S,diacylglyceryl)Cys-, in which Xaa is hydrophobic (preferably Leu), and Yaa (Ala or Ser) and Zaa (Gly or Ala) have small, neutral side chains.. It functions in the pathway protein modification; lipoprotein biosynthesis (signal peptide cleavage). Functionally, this protein specifically catalyzes the removal of signal peptides from prolipoproteins. The protein is Lipoprotein signal peptidase of Yersinia pestis bv. Antiqua (strain Antiqua).